The chain runs to 640 residues: MADVAHQETHGFQTEVKQLLQLMIHSLYSNKEIFLRELVSNAADAADKLRFKALSNDSLYEGDGDLCVKLSIDKDAGSITISDNGIGMDRASVIEHLGTIAKSGTSEFFSNLSGDQAKDSQLIGQFGVGFYSAFIVAEKVVVRSRAAGDDASKGVEWTSEGEGEFTVADIEKADRGTEITLFLREDEKEFADDWRLRSIVSKYSDHISIPVMMYKEEVPESDGPDGEKVPAQPAKWEAVNKATALWTRDKSEVSDEEYKEFYKHISHDFADPLVWSHNKVEGKTEYNSLLYIPAKAPFDMWNRDQKHGLKLYVQRVFIMDDAEQFMPTYLRFVKGLLDSNDLPLNVSREILQDNKITQAIRQGCTKRVLQMLERVAKNDSEKYQGFWAEFGNVLKEGPAEDHANKEKVAGLLRFASTENDSDAQNVSLADYVSRMKDGQDKIYYITADSYKAAKSSPHLEIFRKKGIEVLLMSDRVDEWLMSHLTEFDEKSFQSITHGELDLGDLDDEDSKKAQEEAEKQVEGLTERVKTVLGDKVAEVKFTHRLTDSPACIVADGTGMSTQMIKLMQAAGQPVPEAKYHFELNPEHSLVKMLADEQDEERFGQWTEVLFDQAALSEQGSLKDPAAFVHNLNTLLMNLAK.

The tract at residues 1–348 is a; substrate-binding; it reads MADVAHQETH…SNDLPLNVSR (348 aa). A b region spans residues 349-565; it reads EILQDNKITQ…GTGMSTQMIK (217 aa). The tract at residues 566–640 is c; it reads LMQAAGQPVP…LNTLLMNLAK (75 aa).

This sequence belongs to the heat shock protein 90 family. In terms of assembly, homodimer.

The protein localises to the cytoplasm. In terms of biological role, molecular chaperone. Has ATPase activity. The chain is Chaperone protein HtpG from Pseudoalteromonas atlantica (strain T6c / ATCC BAA-1087).